Here is a 324-residue protein sequence, read N- to C-terminus: UPF0158 protein CPn_0518/CP_0235/CPj0518/CpB0539 (324 aa).

Belongs to the UPF0158 family.

This is UPF0158 protein CPn_0518/CP_0235/CPj0518/CpB0539 from Chlamydia pneumoniae (Chlamydophila pneumoniae).